The primary structure comprises 361 residues: Biotin synthase (361 aa).

One can recognise a Radical SAM core domain in the interval 47–278 (VHGDEVALCG…AAHIFVMGGR (232 aa)). The [4Fe-4S] cluster site is built by Cys-65, Cys-69, and Cys-72. Residues Ser-110, Cys-143, and Cys-203 each coordinate [2Fe-2S] cluster.

The protein belongs to the radical SAM superfamily. Biotin synthase family. Homodimer. [4Fe-4S] cluster serves as cofactor. Requires [2Fe-2S] cluster as cofactor.

The catalysed reaction is (4R,5S)-dethiobiotin + (sulfur carrier)-SH + 2 reduced [2Fe-2S]-[ferredoxin] + 2 S-adenosyl-L-methionine = (sulfur carrier)-H + biotin + 2 5'-deoxyadenosine + 2 L-methionine + 2 oxidized [2Fe-2S]-[ferredoxin]. It participates in cofactor biosynthesis; biotin biosynthesis; biotin from 7,8-diaminononanoate: step 2/2. Its function is as follows. Catalyzes the conversion of dethiobiotin (DTB) to biotin by the insertion of a sulfur atom into dethiobiotin via a radical-based mechanism. The chain is Biotin synthase from Anaeromyxobacter dehalogenans (strain 2CP-C).